Reading from the N-terminus, the 176-residue chain is Ribosome maturation factor RimM (176 aa).

Positions proline 96 to phenylalanine 176 constitute a PRC barrel domain.

This sequence belongs to the RimM family. In terms of assembly, binds ribosomal protein uS19.

The protein localises to the cytoplasm. An accessory protein needed during the final step in the assembly of 30S ribosomal subunit, possibly for assembly of the head region. Essential for efficient processing of 16S rRNA. May be needed both before and after RbfA during the maturation of 16S rRNA. It has affinity for free ribosomal 30S subunits but not for 70S ribosomes. This Shewanella baltica (strain OS223) protein is Ribosome maturation factor RimM.